The chain runs to 112 residues: Iron-sulfur cluster insertion protein ErpA (112 aa).

Residues C40, C104, and C106 each contribute to the iron-sulfur cluster site.

Belongs to the HesB/IscA family. In terms of assembly, homodimer. Requires iron-sulfur cluster as cofactor.

Functionally, required for insertion of 4Fe-4S clusters for at least IspG. This chain is Iron-sulfur cluster insertion protein ErpA, found in Pseudoalteromonas translucida (strain TAC 125).